The primary structure comprises 3174 residues: MNNNNNNNNNNNNNNTNNIIDDNDEIAIVGIGFRLPSGDISKSNDSPIELWDNLMNGFDGIIESRERWSDNFNELGEISNGNAGLLPLDEWKSFDPLFFGINPSEAPSIDPQQRLLLKCTWEALEDARIDPMKIRGSNTSVFIGCSTNDYQNQQQNQMNNNKSNIFGLTNHSISNRISYCFDFRNESITIDTACSSSLNAIKMGYQSIKFSKQNNCNLSIVGGVNLLLDTNVSKSFTHLNMLSKSTNGTARCMTFDESADGYVRGEGVGIVVLKSLKQALSDGNTIYCIINGASSNVDGGGLKDKQNFFSPSSISQCENIKMAIQSTNGKIKFNNIDYIEAHGTGTPTGDPIELEAISNSFKQLNDIAIGSGSCSGSNNNTTQQPLLIGSIKSSIGHLEAASGVASLIKCCLMFKNGYFVPNINFNKPNPMIKFNEWNLKVVTEPIQFNTNKQITMLINSFGITGSNCCLILSQFKNNENQQQQQQQQQQQQQQQQQQQQQRGQQQYDNSQPKKYLIPFSANSTLSLKKYQSIIESEEFQLKINFNEFVKNQIFNKSLSLYQRLVIFSVSNWDEFNKQKQSQKEKEKEKEREGEEKEQLNRVQTLNSKSSTMSMVHSKNPIVVFVFAGQGSQYSRMAMELYNSEPIFKQSINMFDNKLFKYYGYSVFEKFISITDHDDDISIQHPTIAQPIMCMLAISLFEFYKHWGIEASFIVGHSLGEIPAAYCSGMITLDTLCYLIYHRSLAQIQTHCNGGRMLSVNISSEDYLSSNYSTKYPDIEIACYNSPNSIVLGGKEQQLNQISNELKDKGIFSKMLASLSSFHTSNQKIVKDDISKLNIDYELPKIPIFSTVTTNLYYNNFNDSNNNSNNNNNNVETTTTPFNSEYIYNNIVEPVKFSQTISNLYKHIEINKLGTDIVFIELAPHPTLQFYLKQMIPVSTNYFSGKISIYSPLHKKKNDTMEIQKTIAKLYCENRYNINFKSQFDCGSINNHNHTVIPPLQQPQPQPLPNYQWDDEKYWKEDLIQQKHRIEGPPIDILGLSNYDNSSNVKSYQTFIDIKKEPFKYLKGHIVNGKYYFPGCGYIDNLLKLYPSQDLTISSMEFKSPLILIDGINQCLQTNVFQTGKTEFKLYYHFKDNKSNEWVQSCIANFQLLNNNNSNNNNSNNNNNNKKLNLQEIISKKCNKTKISRIDLYQHIKSKTGLTYNDEFQGVIQCFLGDSCSLSEVTVNSSTSKSFFKTQLLDSCLHGMIALIQENCQLVFHKIEGLKYYSSNLQVYETNDINSSNNSIFVYSKFKSRLGNSYLASIIIMLKDGTILIEIERVICKSLKIVKNPLEIEYPIDLVYSRYLQPRDSPIGAPSSFKSLYESDQFKSKDIYSSNISIYQNFISSSLFLNINKRNSNITIKEIENQSIDQLFLNFKSIFINKNLENSIQYERLFKSVFKTIKMFGYKNNNNNNFKELKKQMENNNNYKILKRSTRVISKQLFPFENENDSNLDSPQILFEDGLLDKFYSDTEFVAKNHQLLAEIIKESIKPLVLKKEKITIRILEFGGGVSSLSMVVLNKITQLLEESNNVFNQIDIEYTWSDISTSFIPDAKLKLSKIINNNNNNNNNENNNDLDLDGGKFGIKIIYRSLDLEEPLIEKQNLKYSYYDYVIMSNVLHVVKDIRFSIDQIYKVLVPNGQLLFIEPPFNSIILDNVFGVFNQWWSFQDTDIRKDSCCMNQQSWFDLLTNHNFKYIIMSKELESVSFLIHCKKPSILEININNNNNNNNNNNNNNNNNNNNNNNNNNYEDNVIIFCNEIDKDNKNNNNHFIKMLESIYSFKIIIKISSIKEFIELEESNIITNKSIIYFIKPIEQLNFENFKLVTFEFIEINKRLLSSNNLKCKHVLITTNVNNGKNYLSASVIGAAKYFEEFSEQLQLFYIDFDQQSIENLNLISKIDSLIDETINTQKEFIIMNNEIYYERYKKESIKNLINTFKSNSFEYGIGVSNDSFSNVYLKLTSNLEYKLKSRKEIIKSNKVEVNVLSLGVNYKDYLVYCGLVPPEICNRKGDINNPEIGIDFSGIITRVGKDCGEDQFKVGDEVYGIAFDSSSSHIIIDKDYIVKKPTNLSHSEAASIPAVYLTSLYSIFNIGNFNIQDNESILIHSGTGGVGLSALNILKWKGHKSHLFVTVGSKEKEQYLIDTYGDFITGIYSTRNKDYVKQIKLKLKQLGSNKKGVDLILNTLSSDYLDSNFKCLECGGRIVDLSITHLNPNEYIDFSKFKYNYGYHNVELLFINKRKLQILFLQISNAIENNQLNLIPINEYSNLKIKEAIEFINERKHIGKIIVNNNINLINKLIENNNFNSSSSSGSSSGSGSIDVKEPILKSNYKINNDNLGSTILVTGQTGIVLEILKWIVKFSDCVKDIIIFSKSPMKWELELLVNNNSNIRFHFKSIDICNESLVNESIDQILKDNPLINNVDSIFHFAFQQVSRKVNKIDMESLDISHGAKTFGAINLHNQSIKRNWKLKQFVMASSIASIIGSSKQCSYVCANNVLDSLSRFRKSIGLPSICTNYGSLGDAGFVSRFESVGEMLVGQGLNPISTNLILGSLDLQIQNQHLSTNLLICNFNFPAFKVNAQIPKQKFDFIINSIDGGGGGSNSSSGSGGGGKVVDSLNIKDIFINKISEFLSIESSKINQDLRLLDYGADSLLTVQLKNWIDKEISPNIITIQQIQNNTISLVIKIIITAIDNKKIKDSNQQSNNNENIKTGSFIGGKSKNNNVKNLKFWKKQIKLKVIGNEFSSSTSSYVNITKNGGTSKNNKRILFPFSSGGYLSTYLLFNLVKDSNCSIVYCLNTSIDLIIQSLKYHQLYFNLNQNEISKINIISVSSEKDYNQLFIKNNDINLIIIVSSDSFQDSILFEQEFNETELNLVKELIKSLIINGYCNNNDNNNNNNNNKISIINISSIYIYLGISNEFINENEYNSIEIPNFESIEKLPLSSGKIQSSLLIEHFLKDCSIKFNIPSTMIRIPPIFSNIETGLGNENELLQLFLQSCHSIGFYPNVSTSYPTIPINHLSNLIINQINNQNYYEHDNEKGKLLFNTINLNNNNSNNNNINSQQINQILKCEFNCKQIEFNDWIQILTDSNNSSCVYKYLQLHNIITKYSNSNTDTIQENNLEIINQMIINHLKQKK.

One can recognise a Ketosynthase family 3 (KS3) domain in the interval 23 to 474 (NDEIAIVGIG…GSNCCLILSQ (452 aa)). Residues cysteine 194, histidine 342, and histidine 397 each act as for beta-ketoacyl synthase activity in the active site. Coiled-coil stretches lie at residues 472-509 (LSQF…QYDN) and 574-604 (EFNK…RVQT). Residues 578-599 (QKQSQKEKEKEKEREGEEKEQL) show a composition bias toward basic and acidic residues. Residues 578–601 (QKQSQKEKEKEKEREGEEKEQLNR) are disordered. The interval 707–740 (GIEASFIVGHSLGEIPAAYCSGMITLDTLCYLIY) is acyl/malonyl transferase. Residue serine 717 is the For acyl/malonyl transferase activity of the active site. The interval 1034–1156 (IDILGLSNYD…ANFQLLNNNN (123 aa)) is N-terminal hotdog fold. Residues 1034–1332 (IDILGLSNYD…CKSLKIVKNP (299 aa)) enclose the PKS/mFAS DH domain. The active-site Proton acceptor; for dehydratase activity is the histidine 1068. Residues 1182–1332 (NKTKISRIDL…CKSLKIVKNP (151 aa)) form a C-terminal hotdog fold region. The Proton donor; for dehydratase activity role is filled by aspartate 1241. Residues 1758 to 1793 (LEININNNNNNNNNNNNNNNNNNNNNNNNNNYEDNV) adopt a coiled-coil conformation. One can recognise a Carrier domain in the interval 2653–2730 (VDSLNIKDIF…LVIKIIITAI (78 aa)). At serine 2690 the chain carries O-(pantetheine 4'-phosphoryl)serine.

Pantetheine 4'-phosphate serves as cofactor.

Its function is as follows. Probable polyketide synthase. In Dictyostelium discoideum (Social amoeba), this protein is Probable polyketide synthase 15 (pks15).